The chain runs to 627 residues: UvrABC system protein C (627 aa).

In terms of domain architecture, GIY-YIG spans 22–100 (NNPGVYRMFN…IKRLRPRFNV (79 aa)). The 36-residue stretch at 210–245 (QSVKDHLAAAMQAASADLDFEHAAVYRDRLAALSHV) folds into the UVR domain.

It belongs to the UvrC family. Interacts with UvrB in an incision complex.

It is found in the cytoplasm. The UvrABC repair system catalyzes the recognition and processing of DNA lesions. UvrC both incises the 5' and 3' sides of the lesion. The N-terminal half is responsible for the 3' incision and the C-terminal half is responsible for the 5' incision. This is UvrABC system protein C from Brucella abortus biovar 1 (strain 9-941).